We begin with the raw amino-acid sequence, 176 residues long: MFFHIVLERNMQLHPRFFGRNLKENLVSKLMKDVEGTCSGRHGFVVAITGIDTIGKGLIRDGTGFVTFPVKYQCVVFRPFKGEILEAVVTLVNKMGFFAEAGPVQIFVSKHLIPDDMEFQAGDMPNYTTSDGSVKIQKECEVRLKIIGTRVDATAIFCVGTIKDDFLGVINDPAAA.

This sequence belongs to the eukaryotic RPB7/RPC8 RNA polymerase subunit family. In terms of assembly, component of the RNA polymerase II complex consisting of at least 12 subunits. Interacts with NRPB4.

It is found in the nucleus. DNA-dependent RNA polymerase catalyzes the transcription of DNA into RNA using the four ribonucleoside triphosphates as substrates. Component of RNA polymerase II which synthesizes mRNA precursors and many functional non-coding RNAs. Pol II is the central component of the basal RNA polymerase II transcription machinery. It is composed of mobile elements that move relative to each other. NRPB7 is part of a subcomplex with NRPB4 that binds to a pocket formed by NRPB1, NRPB2 and NRPB6 at the base of the clamp element. The NRBP4-NRPB7 subcomplex seems to lock the clamp via NRPB7 in the closed conformation thus preventing double-stranded DNA to enter the active site cleft. The NRPB4-NRPB7 subcomplex binds single-stranded DNA and RNA. In Arabidopsis thaliana (Mouse-ear cress), this protein is DNA-directed RNA polymerase II subunit 7 (NRPB7).